The chain runs to 228 residues: U1 small nuclear ribonucleoprotein C-2 (228 aa).

Residues 4–36 (YYCDYCDTYLTHDSPSVRKQHNAGYKHKANVRT) form a Matrin-type zinc finger. A disordered region spans residues 105 to 228 (PGVRPPILPA…SYALPSEGNH (124 aa)). Pro residues-rich tracts occupy residues 107 to 156 (VRPP…PPGS) and 164 to 175 (LPRPPTLPPPTS). Positions 178–190 (PGAPIPNSAAPPA) are enriched in low complexity. Pro residues predominate over residues 196-214 (PPAPAGPTSGAPPAPPTAP).

Belongs to the U1 small nuclear ribonucleoprotein C family. In terms of assembly, U1 snRNP is composed of the 7 core Sm proteins B/B', D1, D2, D3, E, F and G that assemble in a heptameric protein ring on the Sm site of the small nuclear RNA to form the core snRNP, and at least 3 U1 snRNP-specific proteins U1-70K, U1-A and U1-C. U1-C interacts with U1 snRNA and the 5' splice-site region of the pre-mRNA.

The protein resides in the nucleus. Component of the spliceosomal U1 snRNP, which is essential for recognition of the pre-mRNA 5' splice-site and the subsequent assembly of the spliceosome. U1-C is directly involved in initial 5' splice-site recognition for both constitutive and regulated alternative splicing. The interaction with the 5' splice-site seems to precede base-pairing between the pre-mRNA and the U1 snRNA. Stimulates commitment or early (E) complex formation by stabilizing the base pairing of the 5' end of the U1 snRNA and the 5' splice-site region. The sequence is that of U1 small nuclear ribonucleoprotein C-2 from Sorghum bicolor (Sorghum).